The chain runs to 1003 residues: PHD finger protein 12 (1003 aa).

Positions 29–59 (APPKTDEAEKRSRKPEKESRRSGRATNHDSC) are disordered. Basic and acidic residues predominate over residues 32 to 59 (KTDEAEKRSRKPEKESRRSGRATNHDSC). Residues 56–105 (HDSCDSCKEGGDLLCCDHCPAAFHLQCCNPPLSEEMLPPGEWMCHRCTVR) form a PHD-type 1 zinc finger. Zn(2+) contacts are provided by Cys-59, Ser-61, Cys-62, His-79, and Cys-82. 2 disordered regions span residues 110–183 (EQKK…HNDV) and 234–255 (TTALPGSSKRRRKEETTGKNVK). 2 positions are modified to phosphoserine: Ser-131 and Ser-134. The segment covering 138–161 (LLDRPASKTELKAIAHARILERRA) has biased composition (basic and acidic residues). Residues 165-178 (GTPTSNASTETPTS) show a composition bias toward polar residues. Residues 202-241 (VQPQLRRPFELLIAAAMERNPTQFQLPNELTCTTALPGSS) are SIN3 interacting domain 1. The segment at 271–321 (VKVCFTCNRSCRVAPLIQCDYCPLLFHMDCLEPPLTAMPLGRWMCPNHIEH) adopts a PHD-type 2; atypical zinc-finger fold. Cys-274, Cys-277, Cys-289, Cys-292, His-297, Cys-300, Cys-315, and His-318 together coordinate Zn(2+). An SIN3 interacting domain 2 region spans residues 328-364 (NLTLSNRCQVFDRFQDTISQHVVKVDFLNRIHKKHPP). Lys-467 participates in a covalent cross-link: Glycyl lysine isopeptide (Lys-Gly) (interchain with G-Cter in SUMO2). Disordered stretches follow at residues 531–583 (KAPC…GWPR) and 641–671 (HRKTVQSQIGPSSTESRPLGSPPNATRVLTP). Residue Ser-555 is modified to Phosphoserine. Thr-557 and Thr-570 each carry phosphothreonine. Polar residues predominate over residues 641–656 (HRKTVQSQIGPSSTES). Residue Thr-670 is modified to Phosphothreonine. The FHA domain occupies 814-868 (LYIGTGADMDVCLTNYGHCNYVSGKHACIFYDENTKHYELLNYSEHGTTVDNVLY). A disordered region spans residues 894-922 (RRRHQKQDEEPSEEAAMMSSQAQGPQRRP). Lys-899 participates in a covalent cross-link: Glycyl lysine isopeptide (Lys-Gly) (interchain with G-Cter in SUMO2). Positions 907–916 (EAAMMSSQAQ) are enriched in low complexity. Glycyl lysine isopeptide (Lys-Gly) (interchain with G-Cter in SUMO2) cross-links involve residues Lys-972, Lys-986, and Lys-990.

As to quaternary structure, component of SIN3 complexes. Interacts with SIN3A in a complex composed of HDAC1, SAP30 and SIN3A. Component of the SIN3B complex, which includes SIN3B, HDAC2 or HDAC1, PHF12 and MORF4L1; interacts directly with all subunits. Interacts with TLE5. In terms of tissue distribution, expressed mainly in heart, brain, lung, liver and testis.

It localises to the nucleus. Functionally, transcriptional repressor acting as key scaffolding subunit of SIN3 complexes which contributes to complex assembly by contacting each core subunit domain, stabilizes the complex and constitutes the substrate receptor by recruiting the H3 histone tail. SIN3 complexes are composed of a SIN3 scaffold subunit, one catalytic core (HDAC1 or HDAC2) and 2 chromatin targeting modules. SIN3B complex represses transcription and counteracts the histone acetyltransferase activity of EP300 through the recognition H3K27ac marks by PHF12 and the activity of the histone deacetylase HDAC2. SIN3B complex is recruited downstream of the constitutively active genes transcriptional start sites through interaction with histones and mitigates histone acetylation and RNA polymerase II progression within transcribed regions contributing to the regulation of transcription. May also repress transcription in a SIN3A-independent manner through recruitment of functional TLE5 complexes to DNA. May also play a role in ribosomal biogenesis. The polypeptide is PHD finger protein 12 (Mus musculus (Mouse)).